Reading from the N-terminus, the 343-residue chain is Phosphatidylglycerol--prolipoprotein diacylglyceryl transferase 1 (343 aa).

The next 4 membrane-spanning stretches (helical) occupy residues 19 to 39 (VPLR…VWLG), 54 to 74 (ADIA…YHVI), 93 to 113 (IWEG…GAWI), and 119 to 139 (GVPM…AQAI). Arg-141 lines the a 1,2-diacyl-sn-glycero-3-phospho-(1'-sn-glycerol) pocket. 3 consecutive transmembrane segments (helical) span residues 176 to 196 (HPTF…VIWA), 202 to 224 (LGHG…WIEY), and 238 to 258 (LNNW…VLSA). Positions 269–343 (EPGAETAAGD…TNGADSAKKG (75 aa)) are disordered. Residues 283–293 (ADKDVKGTKDA) are compositionally biased toward basic and acidic residues. Residues 314–324 (APEDTSGADEA) are compositionally biased toward acidic residues.

The protein belongs to the Lgt family.

It localises to the cell membrane. It catalyses the reaction L-cysteinyl-[prolipoprotein] + a 1,2-diacyl-sn-glycero-3-phospho-(1'-sn-glycerol) = an S-1,2-diacyl-sn-glyceryl-L-cysteinyl-[prolipoprotein] + sn-glycerol 1-phosphate + H(+). The protein operates within protein modification; lipoprotein biosynthesis (diacylglyceryl transfer). Catalyzes the transfer of the diacylglyceryl group from phosphatidylglycerol to the sulfhydryl group of the N-terminal cysteine of a prolipoprotein, the first step in the formation of mature lipoproteins. The polypeptide is Phosphatidylglycerol--prolipoprotein diacylglyceryl transferase 1 (Streptomyces coelicolor (strain ATCC BAA-471 / A3(2) / M145)).